Here is a 131-residue protein sequence, read N- to C-terminus: GATA zinc finger domain-containing protein 2 (131 aa).

Positions 21–55 (STATDATSADGAASETDAASATDTTSATDPTSATD) are enriched in low complexity. Positions 21-85 (STATDATSAD…RGRPYISTPP (65 aa)) are disordered. Over residues 57-74 (IATTNTTGITSSGPTTNG) the composition is skewed to polar residues. A GATA-type zinc finger spans residues 88–115 (CYDCGRTRSPYWRKGTYNGQVVHLCNAC).

The chain is GATA zinc finger domain-containing protein 2 (comH) from Dictyostelium discoideum (Social amoeba).